Reading from the N-terminus, the 364-residue chain is MLQRTPLFPLYAEYGAKTIDFGGWELPVQFSSIKEEHEAVRTRAGLFDVSHMGEFEVKGKDSVAFLQKMMTNDVAKLTDGRAQYTLMCYEDGGTVDDLLVYKKADDHYLLVVNAANIEKDFAWLSEHVVGDVELVNISNDIAQLALQGPLAEKVLQQLTTVDLSTMKFFAFADHVDVAGVQTLVSRTGYTGEDGFELYCRAEDAPTLWRAILEAGKEEGVLPCGLGARDTLRFEACLPLYGQELAKDITPIEAGLGFAVKTNKDVDFFGKEILKKQKEEGAPRRLVGIEMIDKGIARHGYAVYVNNEQIGFVTTGTQSPTLKKNIGLALISTAFSSLDTEVEVDVRGKRLKARVVATPFYKRTK.

This sequence belongs to the GcvT family. As to quaternary structure, the glycine cleavage system is composed of four proteins: P, T, L and H.

It catalyses the reaction N(6)-[(R)-S(8)-aminomethyldihydrolipoyl]-L-lysyl-[protein] + (6S)-5,6,7,8-tetrahydrofolate = N(6)-[(R)-dihydrolipoyl]-L-lysyl-[protein] + (6R)-5,10-methylene-5,6,7,8-tetrahydrofolate + NH4(+). Functionally, the glycine cleavage system catalyzes the degradation of glycine. The polypeptide is Aminomethyltransferase (Anoxybacillus flavithermus (strain DSM 21510 / WK1)).